The sequence spans 308 residues: tRNA dimethylallyltransferase 1 (308 aa).

ATP is bound at residue 9–16 (GPTGVGKT). 11–16 (TGVGKT) is a substrate binding site. The interval 34-37 (DSRQ) is interaction with substrate tRNA.

This sequence belongs to the IPP transferase family. Monomer. Mg(2+) is required as a cofactor.

It catalyses the reaction adenosine(37) in tRNA + dimethylallyl diphosphate = N(6)-dimethylallyladenosine(37) in tRNA + diphosphate. Functionally, catalyzes the transfer of a dimethylallyl group onto the adenine at position 37 in tRNAs that read codons beginning with uridine, leading to the formation of N6-(dimethylallyl)adenosine (i(6)A). The polypeptide is tRNA dimethylallyltransferase 1 (Bacteroides thetaiotaomicron (strain ATCC 29148 / DSM 2079 / JCM 5827 / CCUG 10774 / NCTC 10582 / VPI-5482 / E50)).